Reading from the N-terminus, the 614-residue chain is UvrABC system protein C (614 aa).

Residues 25–103 form the GIY-YIG domain; it reads SVPGVYKMFG…IKSLKPKYNI (79 aa). The UVR domain occupies 214-249; sequence KEIQCELFEMMCRFSNNQDYESAIVCRDRLHALKSM.

Belongs to the UvrC family. In terms of assembly, interacts with UvrB in an incision complex.

The protein localises to the cytoplasm. Functionally, the UvrABC repair system catalyzes the recognition and processing of DNA lesions. UvrC both incises the 5' and 3' sides of the lesion. The N-terminal half is responsible for the 3' incision and the C-terminal half is responsible for the 5' incision. The protein is UvrABC system protein C of Anaplasma phagocytophilum (strain HZ).